The sequence spans 669 residues: Polyamine deacetylase HDAC10 (669 aa).

The tract at residues 1–323 (MGTALVYHED…VCMTVQTLLG (323 aa)) is histone deacetylase. D20 lines the substrate pocket. A Substrate specificity motif is present at residues 21-24 (PECE). H135 serves as the catalytic Proton donor/acceptor. The Zn(2+) site is built by D172, H174, and D265. Residue Y305 participates in substrate binding. Polar residues predominate over residues 361–373 (DVTAVPMSPSSHS). The tract at residues 361–387 (DVTAVPMSPSSHSPEGRPPPLLPGGPV) is disordered. A Phosphoserine modification is found at S393.

This sequence belongs to the histone deacetylase family. HD type 2 subfamily. In terms of assembly, interacts with HDAC3. Interacts with HDAC2 and NCOR2/SMRT. Interacts with HSPA8/HSC70. Interacts with MSH2. As to expression, widely expressed with high levels in liver and kidney.

It is found in the cytoplasm. Its subcellular location is the nucleus. It carries out the reaction N(8)-acetylspermidine + H2O = spermidine + acetate. The enzyme catalyses N-acetylputrescine + H2O = putrescine + acetate. It catalyses the reaction N-acetylcadaverine + H2O = cadaverine + acetate. The catalysed reaction is N(6)-acetyl-L-lysyl-[protein] + H2O = L-lysyl-[protein] + acetate. Polyamine deacetylase (PDAC), which acts preferentially on N(8)-acetylspermidine, and also on acetylcadaverine and acetylputrescine. Exhibits attenuated catalytic activity toward N(1),N(8)-diacetylspermidine and very low activity, if any, toward N(1)-acetylspermidine. Histone deacetylase activity has been observed in vitro. Has also been shown to be involved in MSH2 deacetylation. The physiological relevance of protein/histone deacetylase activity is unclear and could be very weak. May play a role in the promotion of late stages of autophagy, possibly autophagosome-lysosome fusion and/or lysosomal exocytosis in neuroblastoma cells. May play a role in homologous recombination. May promote DNA mismatch repair. The polypeptide is Polyamine deacetylase HDAC10 (HDAC10) (Homo sapiens (Human)).